The following is a 204-amino-acid chain: GTP cyclohydrolase-2 (204 aa).

Residue 49 to 53 (RIHSE) participates in GTP binding. Zn(2+)-binding residues include C54, C65, and C67. Residues Q70, 92 to 94 (EGR), and T114 each bind GTP. D126 functions as the Proton acceptor in the catalytic mechanism. Catalysis depends on R128, which acts as the Nucleophile. Positions 149 and 154 each coordinate GTP.

The protein belongs to the GTP cyclohydrolase II family. Requires Zn(2+) as cofactor.

It catalyses the reaction GTP + 4 H2O = 2,5-diamino-6-hydroxy-4-(5-phosphoribosylamino)-pyrimidine + formate + 2 phosphate + 3 H(+). It functions in the pathway cofactor biosynthesis; riboflavin biosynthesis; 5-amino-6-(D-ribitylamino)uracil from GTP: step 1/4. Its function is as follows. Catalyzes the conversion of GTP to 2,5-diamino-6-ribosylamino-4(3H)-pyrimidinone 5'-phosphate (DARP), formate and pyrophosphate. This is GTP cyclohydrolase-2 from Shewanella baltica (strain OS155 / ATCC BAA-1091).